Consider the following 630-residue polypeptide: L-amino-acid oxidase (630 aa).

A signal peptide spans 1-21 (MAGLALRLVLAATLLGLAGSL). Cysteines 35 and 198 form a disulfide. Residue N53 is glycosylated (N-linked (GlcNAc...) asparagine). FAD is bound by residues 68–69 (VA), 88–89 (EA), R96, and 112–115 (GAMR). Residue R115 participates in substrate binding. N-linked (GlcNAc...) asparagine glycans are attached at residues N133 and N219. V286 serves as a coordination point for FAD. Y395 lines the substrate pocket. FAD-binding positions include E479 and 486–491 (GWVETA). 486–487 (GW) contributes to the substrate binding site. Residues 532–554 (GERPEEQQAREEVSPDEQEPSHK) form a disordered region.

It belongs to the flavin monoamine oxidase family. FIG1 subfamily. FAD is required as a cofactor. In terms of tissue distribution, primarily found in immune tissues. Primarily found in immune tissues, mostly in B-lymphocytes. As to expression, restricted to the testis, predominantly in Sertoli cells at the periphery of the ducts, and the brain, including Purkinje cells, hippocampus and mitral cells in the olfactory bulb. No isoform 2 expression in fetal tissues.

The protein resides in the secreted. The protein localises to the cytoplasmic vesicle. Its subcellular location is the secretory vesicle. It is found in the acrosome. It localises to the lysosome. The enzyme catalyses an L-alpha-amino acid + O2 + H2O = a 2-oxocarboxylate + H2O2 + NH4(+). The catalysed reaction is L-tryptophan + O2 + H2O = indole-3-pyruvate + H2O2 + NH4(+). It carries out the reaction L-phenylalanine + O2 + H2O = 3-phenylpyruvate + H2O2 + NH4(+). It catalyses the reaction L-tyrosine + O2 + H2O = 3-(4-hydroxyphenyl)pyruvate + H2O2 + NH4(+). The enzyme catalyses L-arginine + O2 + H2O = 5-guanidino-2-oxopentanoate + H2O2 + NH4(+). It functions in the pathway amino-acid degradation; L-tryptophan degradation via pyruvate pathway. In terms of biological role, secreted L-amino-acid oxidase that acts as a key immunoregulator. Has preference for L-aromatic amino acids: converts phenylalanine (Phe), tyrosine (Tyr) and tryptophan (Trp) to phenylpyruvic acid (PP), hydroxyphenylpyruvic acid (HPP), and indole-3-pyruvic acid (I3P), respectively. Also has weak L-arginine oxidase activity. Acts as a negative regulator of anti-tumor immunity by mediating Trp degradation via an indole pyruvate pathway that activates the transcription factor AHR. IL4I1-mediated Trp catabolism generates I3P, giving rise to indole metabolites (indole-3-acetic acid (IAA) and indole-3-aldehyde (I3A)) and kynurenic acid, which act as ligands for AHR, a ligand-activated transcription factor that plays important roles in immunity and cancer. AHR activation by indoles following IL4I1-mediated Trp degradation enhances tumor progression by promoting cancer cell motility and suppressing adaptive immunity. Also has an immunoregulatory function in some immune cell, probably by mediating Trp degradation and promoting downstream AHR activation: inhibits T-cell activation and proliferation, promotes the differentiation of naive CD4(+) T-cells into FOXP3(+) regulatory T-cells (Treg) and regulates the development and function of B-cells. Also regulates M2 macrophage polarization by inhibiting T-cell activation. Also has antibacterial properties by inhibiting growth of Gram negative and Gram positive bacteria through the production of NH4(+) and H2O2. The chain is L-amino-acid oxidase from Mus musculus (Mouse).